Reading from the N-terminus, the 238-residue chain is Probable transcriptional regulatory protein SUB0364 (238 aa).

The protein belongs to the TACO1 family. YeeN subfamily.

It is found in the cytoplasm. The polypeptide is Probable transcriptional regulatory protein SUB0364 (Streptococcus uberis (strain ATCC BAA-854 / 0140J)).